Here is a 940-residue protein sequence, read N- to C-terminus: Serine/threonine-protein phosphatase 1 regulatory subunit 10 (940 aa).

An interaction with TOX4 region spans residues 1 to 348; it reads MGSGPIDPKE…EPAPPSEAME (348 aa). A TFIIS N-terminal domain is found at 73–147; sequence KLLNNWLTYS…SDWMAVIRSQ (75 aa). 4 disordered regions span residues 147–210, 248–270, 304–400, and 534–557; these read QSST…KFRS, NVAA…NTTP, KIKK…KSVT, and VETL…LPPV. 2 stretches are compositionally biased toward basic and acidic residues: residues 153-166 and 174-196; these read AEKD…EGKS and PLTE…EKPK. Residue lysine 179 forms a Glycyl lysine isopeptide (Lys-Gly) (interchain with G-Cter in SUMO2) linkage. Threonine 256 bears the Phosphothreonine mark. Residue lysine 262 forms a Glycyl lysine isopeptide (Lys-Gly) (interchain with G-Cter in SUMO2) linkage. Residue serine 313 is modified to Phosphoserine. The span at 325–336 shows a compositional bias: low complexity; the sequence is KTSTEPSTAKPS. The necessary for interaction with PPP1CA stretch occupies residues 357–433; sequence PPVEVPELMD…NKIKDFGEAA (77 aa). Phosphoserine is present on serine 382. The segment at 393 to 408 is necessary for interaction with PPP1CC; that stretch reads GRKRKSVTWPEEGKLR. The short motif at 394–423 is the PP1-binding motif element; that stretch reads RKRKSVTWPEEGKLREYFYFELDETERVNV. Serine 398 bears the Phosphoserine; by PKA mark. The interval 418–619 is interaction with WDR82; that stretch reads TERVNVNKIK…IKQMLVPHGL (202 aa). Positions 540 to 551 are enriched in gly residues; the sequence is GGSGGSPDGAGG. Serine 545 and serine 591 each carry phosphoserine. The interval 617-905 is disordered; sequence HGLLGPGPIA…HDGGHSHGGD (289 aa). The segment covering 644–655 has biased composition (pro residues); sequence PPGPGGPMPGPH. Arginine 665 carries the omega-N-methylarginine modification. Residues 676 to 690 show a composition bias toward low complexity; it reads GDPFWDGPGDPMRGG. An omega-N-methylarginine mark is found at arginine 693 and arginine 738. 2 stretches are compositionally biased toward gly residues: residues 725-763 and 789-844; these read ARGG…GMGN and GSMG…GSGG. Composition is skewed to basic and acidic residues over residues 861 to 886 and 894 to 903; these read PHDV…HDGP and RGHDGGHSHG. The C3H1-type zinc-finger motif lies at 906–934; the sequence is MSNRPVCRHFMMKGNCRYENNCAFYHPGV.

Component of the PNUTS-PP1 complex (also named PTW/PP1 complex), composed of PPP1R10/PNUTS, TOX4, WDR82, and PPP1CA (or PPP1CB or PPP1CC). Phosphorylated on Ser-398 by PKA within the region necessary for interaction with PPP1CA.

It localises to the nucleus. The protein localises to the chromosome. In terms of biological role, substrate-recognition component of the PNUTS-PP1 protein phosphatase complex, a protein phosphatase 1 (PP1) complex that promotes RNA polymerase II transcription pause-release, allowing transcription elongation. Promoter-proximal pausing by RNA polymerase II is a transcription halt following transcription initiation but prior to elongation, which acts as a checkpoint to control that transcripts are favorably configured for transcriptional elongation. The PNUTS-PP1 complex mediates the release of RNA polymerase II from promoter-proximal region of genes by catalyzing dephosphorylation of proteins involved in transcription, such as AFF4, CDK9, MEPCE, INTS12, NCBP1, POLR2M/GDOWN1 and SUPT6H. The PNUTS-PP1 complex also regulates RNA polymerase II transcription termination by mediating dephosphorylation of SUPT5H in termination zones downstream of poly(A) sites, thereby promoting deceleration of RNA polymerase II transcription. PNUTS-PP1 complex is also involved in the response to replication stress by mediating dephosphorylation of POLR2A at 'Ser-5' of the CTD, promoting RNA polymerase II degradation. The PNUTS-PP1 complex also plays a role in the control of chromatin structure and cell cycle progression during the transition from mitosis into interphase. PNUTS-PP1 complex mediates dephosphorylation of MYC, promoting MYC stability by preventing MYC ubiquitination by the SCF(FBXW7) complex. In addition to acts as a substrate-recognition component, PPP1R10/PNUTS also acts as a nuclear targeting subunit for the PNUTS-PP1 complex. In some context, PPP1R10/PNUTS also acts as an inhibitor of protein phosphatase 1 (PP1) activity by preventing access to substrates, such as RB. The polypeptide is Serine/threonine-protein phosphatase 1 regulatory subunit 10 (PPP1R10) (Pan troglodytes (Chimpanzee)).